Reading from the N-terminus, the 393-residue chain is Phosphoglycerate kinase (393 aa).

Substrate is bound by residues 22 to 24 (DFN), Arg-37, 60 to 63 (HLGR), Arg-119, and Arg-152. Residues Lys-202, Gly-293, Glu-324, and 350 to 353 (GGDS) each bind ATP.

It belongs to the phosphoglycerate kinase family. Monomer.

It localises to the cytoplasm. It catalyses the reaction (2R)-3-phosphoglycerate + ATP = (2R)-3-phospho-glyceroyl phosphate + ADP. Its pathway is carbohydrate degradation; glycolysis; pyruvate from D-glyceraldehyde 3-phosphate: step 2/5. The protein is Phosphoglycerate kinase of Borrelia garinii subsp. bavariensis (strain ATCC BAA-2496 / DSM 23469 / PBi) (Borreliella bavariensis).